A 348-amino-acid polypeptide reads, in one-letter code: MTVQPQTLKIRRPDDWHIHLRDDEMLSTVLPYTSEVFARAIVMPNLTPPITTVASAIAYRERILAAIPAGHKFTPLMTCYLTNTLDVNELTRGFEQGVFTAAKLYPANATTNSTHGVSDIPAIYPLFEQMQKIGMPLLIHGEVTDAAVDIFDREARFIDQILEPIRRQFPELKIVFEHITTKDAADYVLAGNPFLGATITPQHLMFNRNHMLVGGIRPHLFCLPILKRSTHQDALRQAVASGSDRFFLGTDSAPHTKHRKESSCGCAGVFNAPSALPAYASVFEEMNALQHLEAFCSLNGPRFYGLPVNEDFVELVRVPFQQPEEISLGNESIIPFLAGQTINWSVKA.

2 residues coordinate Zn(2+): H17 and H19. Residues 19-21 and N45 contribute to the substrate site; that span reads HLR. The Zn(2+) site is built by K103, H140, and H178. K103 carries the N6-carboxylysine modification. H140 lines the substrate pocket. Residue L223 coordinates substrate. Residue D251 participates in Zn(2+) binding. D251 is a catalytic residue. Substrate is bound by residues H255 and A267.

This sequence belongs to the metallo-dependent hydrolases superfamily. DHOase family. Class II DHOase subfamily. Homodimer. Zn(2+) serves as cofactor.

The catalysed reaction is (S)-dihydroorotate + H2O = N-carbamoyl-L-aspartate + H(+). The protein operates within pyrimidine metabolism; UMP biosynthesis via de novo pathway; (S)-dihydroorotate from bicarbonate: step 3/3. Its function is as follows. Catalyzes the reversible cyclization of carbamoyl aspartate to dihydroorotate. In Yersinia enterocolitica serotype O:8 / biotype 1B (strain NCTC 13174 / 8081), this protein is Dihydroorotase.